We begin with the raw amino-acid sequence, 165 residues long: Endoribonuclease YbeY (165 aa).

His-130, His-134, and His-140 together coordinate Zn(2+).

It belongs to the endoribonuclease YbeY family. It depends on Zn(2+) as a cofactor.

It is found in the cytoplasm. Single strand-specific metallo-endoribonuclease involved in late-stage 70S ribosome quality control and in maturation of the 3' terminus of the 16S rRNA. This is Endoribonuclease YbeY from Streptococcus pyogenes serotype M28 (strain MGAS6180).